The chain runs to 190 residues: dCTP deaminase (190 aa).

Residue 113 to 118 (KSTYAR) coordinates dCTP. The active-site Proton donor/acceptor is the E139. 4 residues coordinate dCTP: Q158, Y172, K181, and Q182.

Belongs to the dCTP deaminase family. In terms of assembly, homotrimer.

The catalysed reaction is dCTP + H2O + H(+) = dUTP + NH4(+). It functions in the pathway pyrimidine metabolism; dUMP biosynthesis; dUMP from dCTP (dUTP route): step 1/2. In terms of biological role, catalyzes the deamination of dCTP to dUTP. The chain is dCTP deaminase from Chlamydia trachomatis serovar L2 (strain ATCC VR-902B / DSM 19102 / 434/Bu).